Here is a 110-residue protein sequence, read N- to C-terminus: Keratin, type II cytoskeletal 8 (110 aa).

The tract at residues 1–12 (MSTSGPRAFSSR) is head. The IF rod domain maps to 1–110 (MSTSGPRAFS…LDIEIATYRK (110 aa)). Residues serine 2, serine 4, serine 10, and serine 11 each carry the phosphoserine modification. Arginine 12 carries the post-translational modification Omega-N-methylarginine. The coil 1A stretch occupies residues 13–25 (FASFIDKVRWSLL). The tract at residues 26–39 (QQQKSNMDNMFESY) is linker 1. Lysine 29 participates in a covalent cross-link: Glycyl lysine isopeptide (Lys-Gly) (interchain with G-Cter in SUMO2). Residues 40-79 (INNLRDVDEAYMNKVELESRLEGLTDEINFLRQIHEEEIR) form a coil 1B region. Lysine 53 carries the N6-acetyllysine modification. Residues serine 80 and serine 85 each carry the phosphoserine modification. Residues 80–86 (SLDMDSI) are linker 12. The segment at 87-110 (IAEVRHGDDLRRLALDIEIATYRK) is coil 2. The necessary for interaction with PNN stretch occupies residues 88-99 (AEVRHGDDLRRL). Lysine 110 is covalently cross-linked (Glycyl lysine isopeptide (Lys-Gly) (interchain with G-Cter in SUMO2)).

This sequence belongs to the intermediate filament family. As to quaternary structure, heterotetramer of two type I and two type II keratins. Forms a heterodimer with KRT18. Associates with KRT20. Interacts with PNN. When associated with KRT19, interacts with DMD. Interacts with TCHP. Interacts with APEX1. Interacts with GPER1. Interacts with EPPK1. Interacts with PKP1 and PKP2. Post-translationally, O-glycosylated. O-GlcNAcylation at multiple sites increases solubility, and decreases stability by inducing proteasomal degradation. In terms of processing, O-glycosylated (O-GlcNAcylated), in a cell cycle-dependent manner.

It localises to the cytoplasm. Its subcellular location is the nucleus. The protein resides in the nucleoplasm. It is found in the nucleus matrix. Together with KRT19, helps to link the contractile apparatus to dystrophin at the costameres of striated muscle. The chain is Keratin, type II cytoskeletal 8 from Mesocricetus auratus (Golden hamster).